Reading from the N-terminus, the 163-residue chain is uncharacterized protein (163 aa).

Over residues 1–10 (MTHPLPHDSH) the composition is skewed to basic and acidic residues. Disordered stretches follow at residues 1-21 (MTHPLPHDSHTSGAPPLVNKS) and 71-112 (SKQP…EQRR). Positions 90-105 (PASSLQDHSRLTSLSR) are enriched in polar residues.

This is an uncharacterized protein from Homo sapiens (Human).